Consider the following 491-residue polypeptide: Probable cytosol aminopeptidase (491 aa).

Lysine 260 and aspartate 265 together coordinate Mn(2+). Lysine 272 is an active-site residue. Aspartate 284, aspartate 343, and glutamate 345 together coordinate Mn(2+). Arginine 347 is a catalytic residue.

Belongs to the peptidase M17 family. The cofactor is Mn(2+).

Its subcellular location is the cytoplasm. It carries out the reaction Release of an N-terminal amino acid, Xaa-|-Yaa-, in which Xaa is preferably Leu, but may be other amino acids including Pro although not Arg or Lys, and Yaa may be Pro. Amino acid amides and methyl esters are also readily hydrolyzed, but rates on arylamides are exceedingly low.. It catalyses the reaction Release of an N-terminal amino acid, preferentially leucine, but not glutamic or aspartic acids.. Its function is as follows. Presumably involved in the processing and regular turnover of intracellular proteins. Catalyzes the removal of unsubstituted N-terminal amino acids from various peptides. The chain is Probable cytosol aminopeptidase from Rippkaea orientalis (strain PCC 8801 / RF-1) (Cyanothece sp. (strain PCC 8801)).